Consider the following 605-residue polypeptide: Probable potassium transport system protein Kup 1 (605 aa).

The next 12 helical transmembrane spans lie at 16-36 (ALGL…TVIF), 46-66 (VFGI…MEYA), 97-117 (VAFA…DGVI), 138-158 (GLST…LFSV), 166-186 (VAGA…VTGV), 212-232 (GLAG…GEAL), 248-268 (WYFV…FAIT), 287-307 (LYIP…QSII), 339-359 (IYLG…MLLF), 368-388 (AYGM…IIVF), 397-417 (ALVA…TFSK), and 418-438 (IPHG…TIII).

This sequence belongs to the HAK/KUP transporter (TC 2.A.72) family.

The protein resides in the cell inner membrane. The enzyme catalyses K(+)(in) + H(+)(in) = K(+)(out) + H(+)(out). Transport of potassium into the cell. Likely operates as a K(+):H(+) symporter. This Geobacter metallireducens (strain ATCC 53774 / DSM 7210 / GS-15) protein is Probable potassium transport system protein Kup 1.